Here is a 198-residue protein sequence, read N- to C-terminus: UPF0215 protein NEQ431 (198 aa).

Residues 179-198 (TKGDSSKPRAGGDSNPGPAG) are disordered.

It belongs to the UPF0215 family.

The chain is UPF0215 protein NEQ431 from Nanoarchaeum equitans (strain Kin4-M).